The primary structure comprises 124 residues: Large ribosomal subunit protein bL12 (124 aa).

Belongs to the bacterial ribosomal protein bL12 family. As to quaternary structure, homodimer. Part of the ribosomal stalk of the 50S ribosomal subunit. Forms a multimeric L10(L12)X complex, where L10 forms an elongated spine to which 2 to 4 L12 dimers bind in a sequential fashion. Binds GTP-bound translation factors.

In terms of biological role, forms part of the ribosomal stalk which helps the ribosome interact with GTP-bound translation factors. Is thus essential for accurate translation. In Liberibacter africanus subsp. capensis, this protein is Large ribosomal subunit protein bL12.